The following is a 307-amino-acid chain: Methionyl-tRNA formyltransferase (307 aa).

Position 108–111 (108–111 (SLLP)) interacts with (6S)-5,6,7,8-tetrahydrofolate.

It belongs to the Fmt family.

It catalyses the reaction L-methionyl-tRNA(fMet) + (6R)-10-formyltetrahydrofolate = N-formyl-L-methionyl-tRNA(fMet) + (6S)-5,6,7,8-tetrahydrofolate + H(+). Its function is as follows. Attaches a formyl group to the free amino group of methionyl-tRNA(fMet). The formyl group appears to play a dual role in the initiator identity of N-formylmethionyl-tRNA by promoting its recognition by IF2 and preventing the misappropriation of this tRNA by the elongation apparatus. In Xylella fastidiosa (strain 9a5c), this protein is Methionyl-tRNA formyltransferase.